The sequence spans 453 residues: Tol-Pal system protein TolB (453 aa).

Residues 1-34 (MYLIIKKTHKLPHWLQKVSLSIMLIIFLWKPALL) form the signal peptide.

It belongs to the TolB family. The Tol-Pal system is composed of five core proteins: the inner membrane proteins TolA, TolQ and TolR, the periplasmic protein TolB and the outer membrane protein Pal. They form a network linking the inner and outer membranes and the peptidoglycan layer.

It localises to the periplasm. In terms of biological role, part of the Tol-Pal system, which plays a role in outer membrane invagination during cell division and is important for maintaining outer membrane integrity. TolB occupies a key intermediary position in the Tol-Pal system because it communicates directly with both membrane-embedded components, Pal in the outer membrane and TolA in the inner membrane. The polypeptide is Tol-Pal system protein TolB (Blochmanniella pennsylvanica (strain BPEN)).